Consider the following 350-residue polypeptide: m7GpppX diphosphatase (350 aa).

Ser2 bears the N-acetylserine mark. The residue at position 60 (Ser60) is a Phosphoserine. Thr66 bears the Phosphothreonine mark. A Phosphothreonine; by YAK1 modification is found at Thr66. Position 70 is a phosphotyrosine (Tyr70). Thr120 bears the Phosphothreonine mark. Residues Glu171, Lys196, and His259–His270 contribute to the substrate site. Residues His266–His270 carry the Histidine triad motif motif. His268 (nucleophile) is an active-site residue.

It belongs to the HIT family. In terms of assembly, homodimer. Forms heterodimer with DCS2; the interaction inhibits the DCS1 scavenger decapping activity during post-diauxic growth. Phosphorylated. Phosphorylation occurs upon glucose deprivation.

The protein localises to the cytoplasm. Its subcellular location is the perinuclear region. It localises to the P-body. The catalysed reaction is a 5'-end (N(7)-methyl 5'-triphosphoguanosine)-ribonucleoside in mRNA + H2O = N(7)-methyl-GMP + a 5'-end diphospho-ribonucleoside in mRNA + 2 H(+). The hydrolytic product 7-methylguanosine diphosphate (m7GDP) efficiently inhibits the decapping scavenger activity and acts as a competitive inhibitor in vitro. Decapping scavenger enzyme that catalyzes the cleavage of a residual cap structure following the degradation of mRNAs by the 3'-&gt;5' exosome-mediated mRNA decay pathway. Hydrolyzes cap analog structures like 7-methylguanosine nucleoside triphosphate (m7GpppG) and tri-methyl guanosine nucleoside triphosphate (m3(2,2,7)GpppG) with up to 10 nucleotide substrates (small capped oligoribonucleotides) and specifically releases 5'-phosphorylated RNA fragments and 7-methylguanosine monophosphate (m7GMP) or tri-methyl guanosine nucleoside monophosphate (m3(2,2,7)GMP), respectively. Does not hydrolyze unmethylated cap analog (GpppG) and shows no decapping activity on intact m7GpppG-capped mRNA molecules longer than 25 nucleotides. Does not hydrolyze 7-methylguanosine diphosphate (m7GDP) and tri-methylguanosine diphosphate (m3(2,2,7)GDP) to (m(7)GMP) and m3(2,2,7)GMP, respectively. May also play a role in the 5'-&gt;3 mRNA decay pathway; m7GDP, the downstream product released by the 5'-&gt;3' mRNA mediated decapping activity, may be also converted by DCS1 to m7GMP. Binds to m7GpppG and strongly to m7GDP. May also regulate the 5'-&gt;3' exoribonucleolytic mRNA decay pathway in a cap-independent manner. Negatively regulates trehalase activity. The sequence is that of m7GpppX diphosphatase from Saccharomyces cerevisiae (strain ATCC 204508 / S288c) (Baker's yeast).